A 729-amino-acid polypeptide reads, in one-letter code: Bromo and FHA domain-containing protein DDB_G0267958 (729 aa).

Residues 46 to 79 show a composition bias toward low complexity; it reads LPIPNTSNTNPPMNQSSSPTTTTTTPTTTTTPTT. Residues 46–83 form a disordered region; it reads LPIPNTSNTNPPMNQSSSPTTTTTTPTTTTTPTTAEPA. The FHA domain occupies 112 to 167; sequence LIIGSDTELADIQVVRPGIYPKHVEIIYDKEKKKFYLNPLIDPKDSDNVRLNFVPF. Composition is skewed to low complexity over residues 208–221, 229–275, and 283–306; these read IPSN…NTPI, PPSS…ATKT, and PTKT…AVKK. Disordered regions lie at residues 208–361 and 403–442; these read IPSN…MSCK and SRRP…PKVP. Residues 310–341 are compositionally biased toward acidic residues; sequence DDDYGDDYNEEEDDDDEEEEEEEEEEEEEEEV. Positions 315-352 form a coiled coil; that stretch reads DDYNEEEDDDDEEEEEEEEEEEEEEEVESKQIKVVNSK. Over residues 406-431 the composition is skewed to low complexity; the sequence is PTAPVTPTKPTSTKKVTTPKKATVVK. In terms of domain architecture, Bromo spans 498-617; it reads SNEKKEILKC…IELYKALSNS (120 aa). Residues 659–718 are a coiled coil; that stretch reads SKNKEQTVPQEEDEEEEEEEEEEEEEEEEGEEGKEDEEEEEKEEEEGEENEEEEDVEIDD. Residues 659–729 are disordered; it reads SKNKEQTVPQ…EIDQESDDDQ (71 aa). The segment covering 668-729 has biased composition (acidic residues); the sequence is QEEDEEEEEE…EIDQESDDDQ (62 aa).

In Dictyostelium discoideum (Social amoeba), this protein is Bromo and FHA domain-containing protein DDB_G0267958.